The chain runs to 374 residues: UPF0754 membrane protein SAR1937 (374 aa).

A run of 2 helical transmembrane segments spans residues 4–24 (LFII…TNVI) and 354–374 (SLGF…AIFV).

This sequence belongs to the UPF0754 family.

Its subcellular location is the cell membrane. The sequence is that of UPF0754 membrane protein SAR1937 from Staphylococcus aureus (strain MRSA252).